A 124-amino-acid chain; its full sequence is Small ribosomal subunit protein bS6 (124 aa).

The protein belongs to the bacterial ribosomal protein bS6 family.

Binds together with bS18 to 16S ribosomal RNA. This chain is Small ribosomal subunit protein bS6, found in Rippkaea orientalis (strain PCC 8801 / RF-1) (Cyanothece sp. (strain PCC 8801)).